Reading from the N-terminus, the 475-residue chain is Ribulose bisphosphate carboxylase large chain (475 aa).

Residues 1-2 (MS) constitute a propeptide that is removed on maturation. Proline 3 bears the N-acetylproline mark. The residue at position 14 (lysine 14) is an N6,N6,N6-trimethyllysine. Substrate is bound by residues asparagine 123 and threonine 173. The active-site Proton acceptor is lysine 175. Residue lysine 177 coordinates substrate. 3 residues coordinate Mg(2+): lysine 201, aspartate 203, and glutamate 204. An N6-carboxylysine modification is found at lysine 201. Catalysis depends on histidine 294, which acts as the Proton acceptor. Arginine 295, histidine 327, and serine 379 together coordinate substrate.

The protein belongs to the RuBisCO large chain family. Type I subfamily. Heterohexadecamer of 8 large chains and 8 small chains; disulfide-linked. The disulfide link is formed within the large subunit homodimers. The cofactor is Mg(2+). The disulfide bond which can form in the large chain dimeric partners within the hexadecamer appears to be associated with oxidative stress and protein turnover.

It localises to the plastid. The protein resides in the chloroplast. It catalyses the reaction 2 (2R)-3-phosphoglycerate + 2 H(+) = D-ribulose 1,5-bisphosphate + CO2 + H2O. The enzyme catalyses D-ribulose 1,5-bisphosphate + O2 = 2-phosphoglycolate + (2R)-3-phosphoglycerate + 2 H(+). RuBisCO catalyzes two reactions: the carboxylation of D-ribulose 1,5-bisphosphate, the primary event in carbon dioxide fixation, as well as the oxidative fragmentation of the pentose substrate in the photorespiration process. Both reactions occur simultaneously and in competition at the same active site. This chain is Ribulose bisphosphate carboxylase large chain, found in Pinus balfouriana (Foxtail pine).